The primary structure comprises 557 residues: 2-succinyl-5-enolpyruvyl-6-hydroxy-3-cyclohexene-1-carboxylate synthase (557 aa).

Belongs to the TPP enzyme family. MenD subfamily. As to quaternary structure, homodimer. It depends on Mg(2+) as a cofactor. Mn(2+) is required as a cofactor. Thiamine diphosphate serves as cofactor.

The catalysed reaction is isochorismate + 2-oxoglutarate + H(+) = 5-enolpyruvoyl-6-hydroxy-2-succinyl-cyclohex-3-ene-1-carboxylate + CO2. It participates in quinol/quinone metabolism; 1,4-dihydroxy-2-naphthoate biosynthesis; 1,4-dihydroxy-2-naphthoate from chorismate: step 2/7. It functions in the pathway quinol/quinone metabolism; menaquinone biosynthesis. Its function is as follows. Catalyzes the thiamine diphosphate-dependent decarboxylation of 2-oxoglutarate and the subsequent addition of the resulting succinic semialdehyde-thiamine pyrophosphate anion to isochorismate to yield 2-succinyl-5-enolpyruvyl-6-hydroxy-3-cyclohexene-1-carboxylate (SEPHCHC). The sequence is that of 2-succinyl-5-enolpyruvyl-6-hydroxy-3-cyclohexene-1-carboxylate synthase from Serratia proteamaculans (strain 568).